The primary structure comprises 381 residues: MTQTTHHTPDTARQADPFPVKGMDAVVFAVGNAKQAAHYYSTAFGMQLVAYSGPENGSRETASYVLTNGSARFVLTSVIKPATPWGHFLADHVAEHGDGVVDLAIEVPDARAAHAYAIEHGARSVAEPYELKDEHGTVVLAAIATYGKTRHTLVDRTGYDGPYLPGYVAAAPIVEPPAHRTFQAIDHCVGNVELGRMNEWVGFYNKVMGFTNMKEFVGDDIATEYSALMSKVVADGTLKVKFPINEPALAKKKSQIDEYLEFYGGAGVQHIALNTGDIVETVRTMRAAGVQFLDTPDSYYDTLGEWVGDTRVPVDTLRELKILADRDEDGYLLQIFTKPVQDRPTVFFEIIERHGSMGFGKGNFKALFEAIEREQEKRGNL.

VOC domains follow at residues 22 to 156 (GMDA…LVDR) and 184 to 338 (AIDH…IFTK). Residues His-187, His-270, and Glu-349 each contribute to the Fe cation site.

Belongs to the 4HPPD family. Homodimer. Requires Fe cation as cofactor.

The catalysed reaction is 3-(4-hydroxyphenyl)pyruvate + O2 = homogentisate + CO2. It participates in amino-acid degradation; L-phenylalanine degradation; acetoacetate and fumarate from L-phenylalanine: step 3/6. The sequence is that of 4-hydroxyphenylpyruvate dioxygenase (hpd) from Streptomyces avermitilis (strain ATCC 31267 / DSM 46492 / JCM 5070 / NBRC 14893 / NCIMB 12804 / NRRL 8165 / MA-4680).